A 130-amino-acid polypeptide reads, in one-letter code: Small ribosomal subunit protein uS11c (130 aa).

Belongs to the universal ribosomal protein uS11 family. As to quaternary structure, part of the 30S ribosomal subunit.

It is found in the plastid. Its subcellular location is the chloroplast. The polypeptide is Small ribosomal subunit protein uS11c (Chaetosphaeridium globosum (Charophycean green alga)).